A 517-amino-acid chain; its full sequence is MSVAAKKIQDLQKKKEKIALGGGIKRIEKQHASGKMTARERLAYLFDEGTFVEMDAFVQHRCTNFGMDKQDLPSESVVTGYGMVDGRVVYAFSQDFTVTGGALGEMHAKKICKAMDMAGKVGAPVVGLNDSGGARIQEAVDALSGYGDIFYRNSIYSGVVPQISAILGPCAGGAVYSPALTDFIFMVDQTSQMFITGPQVIKTVTGEEVTAEQLGGAMTHNSTSGCAQFISQDDKACIDDIRRLISFLPSNNMEKAPEFGCEDDLNIQFPELDALMPDNPNKAYNMFDVITKIVDNGDYMEYQPHYSKNIITCFARVNGKSVGIIANQPQVMAGCLDIDSGDKCAKFIRTCDAFNIPLLTIVDVPGFLPGVTQEYGGIIRHGAKILYAYSEATVPKVTLITRKAYGGAYVAMCSKSLGADVVLAWPTAEIAVMGPAGAVNIIFRKDIKDAKDPAATTKQKLDEYTTEFANPYQAARRGLVDDVIEPKTSRQRIVDAFNMLEGKREKLPAKKHGNIPL.

The region spanning 4–260 (AAKKIQDLQK…NNMEKAPEFG (257 aa)) is the CoA carboxyltransferase N-terminal domain. Residues 271–513 (ELDALMPDNP…REKLPAKKHG (243 aa)) form the CoA carboxyltransferase C-terminal domain.

It belongs to the AccD/PCCB family. In terms of assembly, the methylmalonyl-CoA decarboxylase is composed of four subunits: the carboxyltransferase alpha subunit (MmdA), the tunnel beta subunit (MmdB), the biotin-containing gamma subunit (MmdC) and the delta subunit (MmdD).

Its subcellular location is the cell membrane. It carries out the reaction (S)-methylmalonyl-CoA + Na(+)(in) + H(+)(out) = propanoyl-CoA + Na(+)(out) + CO2. In terms of biological role, carboxyltransferase subunit of the sodium ion pump methylmalonyl-CoA decarboxylase, which converts the chemical energy of a decarboxylation reaction into an electrochemical gradient of Na(+) ions across the cytoplasmic membrane, thereby creating a sodium ion motive force that is used for ATP synthesis. The alpha subunit catalyzes the Na(+)-independent carboxyltransfer from methylmalonyl-CoA to the prosthetic biotin group located on the gamma subunit. In Propionigenium modestum, this protein is Methylmalonyl-CoA decarboxylase subunit alpha.